A 368-amino-acid chain; its full sequence is ATP-dependent (S)-NAD(P)H-hydrate dehydratase (368 aa).

A YjeF C-terminal domain is found at 3–359; it reads SPSKKLLANV…DEVHGSFLDL (357 aa). (6S)-NADPHX contacts are provided by residues G120 and 173–179; that span reads NVVEFAR. ATP is bound by residues 217–221 and 236–245; these read KGPHD and GGLKRSGGQG. D246 contributes to the (6S)-NADPHX binding site.

Belongs to the NnrD/CARKD family. It depends on Mg(2+) as a cofactor.

Its subcellular location is the cytoplasm. It carries out the reaction (6S)-NADHX + ATP = ADP + phosphate + NADH + H(+). The enzyme catalyses (6S)-NADPHX + ATP = ADP + phosphate + NADPH + H(+). Catalyzes the dehydration of the S-form of NAD(P)HX at the expense of ATP, which is converted to ADP. Together with NAD(P)HX epimerase, which catalyzes the epimerization of the S- and R-forms, the enzyme allows the repair of both epimers of NAD(P)HX, a damaged form of NAD(P)H that is a result of enzymatic or heat-dependent hydration. This is ATP-dependent (S)-NAD(P)H-hydrate dehydratase from Ajellomyces capsulatus (strain G186AR / H82 / ATCC MYA-2454 / RMSCC 2432) (Darling's disease fungus).